A 450-amino-acid chain; its full sequence is MIKIIIGVVVLGIVVLFHELGHFVAALWCRVEVLSFSVGMGPVLFRKKFGKTEYRLSMLPLGGYCGMKGEQAFQTALDQKLSRIPVEPGSLYAVGPLKRMGIAFAGPLANVLMAVMVLALVSALGSRVHTFGNRISPVYVYDSSDNSPARRVGLQDGDTILRIGDQPIRYFSDIQKIVSQHAQRALPFVIERRGQLMHVTITPDRDAHTGMGRVGIYHYVPLVVAAVDAHGAASRAGLEPEDKILAVAGRRVQHAVQLLALLKEFRKKSVVLTVLRSGKRRYHTIALVRTENGAIDVGIEWKAHTVVIPGTSFFASVRAGIAETLRMCVLTVKGIGMLFRGLQFQQAISGPLRITHVIGDVAQHGFQESFLTGLSQLCEFVALVCVSLFIMNLLPIPILDGGLILFACVELFMQRSIHPRVLYYLQFVGFAFVALIFLCAFWNDVNFLFH.

A Zn(2+)-binding site is contributed by His18. Residue Glu19 is part of the active site. His22 contacts Zn(2+). Residues 102 to 124 (IAFAGPLANVLMAVMVLALVSAL) form a helical membrane-spanning segment. Positions 200-278 (TITPDRDAHT…SVVLTVLRSG (79 aa)) constitute a PDZ domain. 2 consecutive transmembrane segments (helical) span residues 384–406 (VCVS…LILF) and 421–443 (VLYY…AFWN).

It belongs to the peptidase M50B family. Requires Zn(2+) as cofactor.

It localises to the cell inner membrane. This Treponema pallidum (strain Nichols) protein is Putative zinc metalloprotease TP_0600.